We begin with the raw amino-acid sequence, 278 residues long: Large ribosomal subunit protein uL2 (278 aa).

The tract at residues 202-278 (ANINDGKAGR…IMRSRHQRKK (77 aa)) is disordered.

The protein belongs to the universal ribosomal protein uL2 family. Part of the 50S ribosomal subunit. Forms a bridge to the 30S subunit in the 70S ribosome.

Functionally, one of the primary rRNA binding proteins. Required for association of the 30S and 50S subunits to form the 70S ribosome, for tRNA binding and peptide bond formation. It has been suggested to have peptidyltransferase activity; this is somewhat controversial. Makes several contacts with the 16S rRNA in the 70S ribosome. The sequence is that of Large ribosomal subunit protein uL2 from Rhizobium johnstonii (strain DSM 114642 / LMG 32736 / 3841) (Rhizobium leguminosarum bv. viciae).